A 182-amino-acid chain; its full sequence is ATP synthase subunit delta, organellar chromatophore (182 aa).

Belongs to the ATPase delta chain family. F-type ATPases have 2 components, F(1) - the catalytic core - and F(0) - the membrane proton channel. F(1) has five subunits: alpha(3), beta(3), gamma(1), delta(1), epsilon(1). CF(0) has four main subunits: a(1), b(1), b'(1) and c(10-14). The alpha and beta chains form an alternating ring which encloses part of the gamma chain. F(1) is attached to F(0) by a central stalk formed by the gamma and epsilon chains, while a peripheral stalk is formed by the delta, b and b' chains.

It localises to the plastid. Its subcellular location is the organellar chromatophore thylakoid membrane. In terms of biological role, f(1)F(0) ATP synthase produces ATP from ADP in the presence of a proton or sodium gradient. F-type ATPases consist of two structural domains, F(1) containing the extramembraneous catalytic core and F(0) containing the membrane proton channel, linked together by a central stalk and a peripheral stalk. During catalysis, ATP synthesis in the catalytic domain of F(1) is coupled via a rotary mechanism of the central stalk subunits to proton translocation. This protein is part of the stalk that links CF(0) to CF(1). It either transmits conformational changes from CF(0) to CF(1) or is implicated in proton conduction. This Paulinella chromatophora protein is ATP synthase subunit delta, organellar chromatophore.